The following is an 848-amino-acid chain: Transforming growth factor beta receptor type 3 (848 aa).

The N-terminal stretch at Met1–Ala20 is a signal peptide. The Extracellular segment spans residues Gly21 to Val784. N-linked (GlcNAc...) asparagine glycosylation is found at Asn34 and Asn141. A disulfide bridge links Cys52 with Cys197. The segment at Ser390–Asp448 is disordered. The segment covering Gly411 to Asp425 has biased composition (basic and acidic residues). Residues Arg454–Cys729 form the ZP domain. N-linked (GlcNAc...) asparagine glycosylation occurs at Asn491. O-linked (Xyl...) (glycosaminoglycan) serine glycans are attached at residues Ser529, Ser533, and Ser544. Asn570, Asn589, and Asn696 each carry an N-linked (GlcNAc...) asparagine glycan. 3 disulfides stabilise this stretch: Cys638-Cys704, Cys659-Cys729, and Cys709-Cys722. The tract at residues Met736–Pro750 is interaction with TGF-beta ligand. Residues Met785 to Tyr806 traverse the membrane as a helical segment. The Cytoplasmic portion of the chain corresponds to Ser807–Ala848. Residues Ala813–Ala848 are disordered. Low complexity predominate over residues Ser833 to Ala848. Residue Thr837 is modified to Phosphothreonine.

In terms of assembly, forms homodimers and homooligomers. Interacts with DYNLT4. Interacts with integrin ITGA5:ITGB1; this interaction promotes the internalization and trafficking of ITGA5:ITGB1 into endocytic vesicles. Interacts with TGFB1, BMP2, BMP5, BMP7 or GDF5 and inhibin A via the ligand binding domains. Interacts with ALK3/BMPR1A; this interaction results in the cell surface retention of BMPR1A. Interacts with ALK6/BMPR1B; this interaction enhances BMPR1B-mediated stimulation of the BMP signaling pathway. Interacts with the scaffolding protein beta-arrestin2/ARRB2; this interaction mediates internalization of TGFBR3 and thus regulates migration, actin cytoskeleton and activation of CDC42. Extensively modified by glycosaminoglycan groups (GAG). In terms of processing, phosphorylated in the cytoplasmic domain by the type II receptor TGFBR2 at THR-837 to mediate recruitment of ARRB2 and subsequent internalization of TGFBR2 and TGFBR3.

Its subcellular location is the cell membrane. The protein localises to the secreted. It localises to the extracellular space. It is found in the extracellular matrix. Cell surface receptor that regulates diverse cellular processes including cell proliferation, differentiation, migration, and apoptosis. Initiates BMP, inhibin, and TGF-beta signaling pathways by interacting with different ligands including TGFB1, BMP2, BMP5, BMP7 or GDF5. Alternatively, acts as a cell surface coreceptor for BMP ligands, serving to enhance ligand binding by differentially regulating BMPR1A/ALK3 and BMPR1B/ALK6 receptor trafficking. Promotes epithelial cell adhesion, focal adhesion formation and integrin signaling during epithelial cell spreading on fibronectin. By interacting with the scaffolding protein beta-arrestin2/ARRB2, regulates migration or actin cytoskeleton and promotes the activation of CDC42 as well as the inhibition of NF-kappa-B. In gonadotrope cells, acts as an inhibin A coreceptor and regulates follicle-stimulating hormone (FSH) levels and female fertility. Plays a role in the inhibition of directed and random cell migration in epithelial cells by altering the actin cytoskeletal organization. Participates in epithelial-mesenchymal transformation (EMT) upon binding to BMP2 or TGFB2, by activating the PAR6/SMURF1/RHOA pathway. The chain is Transforming growth factor beta receptor type 3 (TGFBR3) from Sus scrofa (Pig).